Consider the following 572-residue polypeptide: Proline--tRNA ligase (572 aa).

It belongs to the class-II aminoacyl-tRNA synthetase family. ProS type 1 subfamily. Homodimer.

Its subcellular location is the cytoplasm. It catalyses the reaction tRNA(Pro) + L-proline + ATP = L-prolyl-tRNA(Pro) + AMP + diphosphate. Functionally, catalyzes the attachment of proline to tRNA(Pro) in a two-step reaction: proline is first activated by ATP to form Pro-AMP and then transferred to the acceptor end of tRNA(Pro). As ProRS can inadvertently accommodate and process non-cognate amino acids such as alanine and cysteine, to avoid such errors it has two additional distinct editing activities against alanine. One activity is designated as 'pretransfer' editing and involves the tRNA(Pro)-independent hydrolysis of activated Ala-AMP. The other activity is designated 'posttransfer' editing and involves deacylation of mischarged Ala-tRNA(Pro). The misacylated Cys-tRNA(Pro) is not edited by ProRS. The polypeptide is Proline--tRNA ligase (Photorhabdus laumondii subsp. laumondii (strain DSM 15139 / CIP 105565 / TT01) (Photorhabdus luminescens subsp. laumondii)).